A 219-amino-acid polypeptide reads, in one-letter code: Putative GEM-like protein 8 (219 aa).

Positions 96 to 174 (KIYKRLFKVS…CKINGVNQSQ (79 aa)) constitute a GRAM domain.

This sequence belongs to the GEM family.

This Arabidopsis thaliana (Mouse-ear cress) protein is Putative GEM-like protein 8.